Here is a 428-residue protein sequence, read N- to C-terminus: S-adenosylmethionine synthase (428 aa).

His-14 contacts ATP. Asp-16 contacts Mg(2+). Glu-42 lines the K(+) pocket. L-methionine-binding residues include Glu-55 and Gln-98. The interval 98–108 (QSGDINRGVER) is flexible loop. ATP is bound by residues 165 to 167 (DAK), 251 to 252 (KF), Asp-260, 266 to 267 (RK), Ala-283, and Lys-287. Asp-260 provides a ligand contact to L-methionine. Lys-291 is a binding site for L-methionine.

It belongs to the AdoMet synthase family. Homotetramer; dimer of dimers. Mg(2+) serves as cofactor. K(+) is required as a cofactor.

The protein localises to the cytoplasm. It catalyses the reaction L-methionine + ATP + H2O = S-adenosyl-L-methionine + phosphate + diphosphate. The protein operates within amino-acid biosynthesis; S-adenosyl-L-methionine biosynthesis; S-adenosyl-L-methionine from L-methionine: step 1/1. In terms of biological role, catalyzes the formation of S-adenosylmethionine (AdoMet) from methionine and ATP. The overall synthetic reaction is composed of two sequential steps, AdoMet formation and the subsequent tripolyphosphate hydrolysis which occurs prior to release of AdoMet from the enzyme. This chain is S-adenosylmethionine synthase, found in Parabacteroides distasonis (strain ATCC 8503 / DSM 20701 / CIP 104284 / JCM 5825 / NCTC 11152).